A 371-amino-acid polypeptide reads, in one-letter code: Putative glutamate--cysteine ligase 2 (371 aa).

It belongs to the glutamate--cysteine ligase type 2 family. YbdK subfamily.

It catalyses the reaction L-cysteine + L-glutamate + ATP = gamma-L-glutamyl-L-cysteine + ADP + phosphate + H(+). In terms of biological role, ATP-dependent carboxylate-amine ligase which exhibits weak glutamate--cysteine ligase activity. This chain is Putative glutamate--cysteine ligase 2, found in Burkholderia cenocepacia (strain HI2424).